Consider the following 101-residue polypeptide: Small ribosomal subunit protein bS18c (101 aa).

The segment covering 1-19 has biased composition (basic residues); it reads MDKSKRPFRKSKRSFRRRL. 2 disordered regions span residues 1 to 23 and 82 to 101; these read MDKS…PPIG and KQFE…TRNK.

The protein belongs to the bacterial ribosomal protein bS18 family. Part of the 30S ribosomal subunit.

Its subcellular location is the plastid. The protein resides in the chloroplast. This Drimys granadensis protein is Small ribosomal subunit protein bS18c.